Here is a 79-residue protein sequence, read N- to C-terminus: UPF0180 protein Bcer98_1118 (79 aa).

The protein belongs to the UPF0180 family.

In Bacillus cytotoxicus (strain DSM 22905 / CIP 110041 / 391-98 / NVH 391-98), this protein is UPF0180 protein Bcer98_1118.